We begin with the raw amino-acid sequence, 166 residues long: Crossover junction endodeoxyribonuclease RuvC (166 aa).

Active-site residues include D11, E71, and D142. 3 residues coordinate Mg(2+): D11, E71, and D142.

The protein belongs to the RuvC family. Homodimer which binds Holliday junction (HJ) DNA. The HJ becomes 2-fold symmetrical on binding to RuvC with unstacked arms; it has a different conformation from HJ DNA in complex with RuvA. In the full resolvosome a probable DNA-RuvA(4)-RuvB(12)-RuvC(2) complex forms which resolves the HJ. Mg(2+) is required as a cofactor.

It is found in the cytoplasm. It carries out the reaction Endonucleolytic cleavage at a junction such as a reciprocal single-stranded crossover between two homologous DNA duplexes (Holliday junction).. The RuvA-RuvB-RuvC complex processes Holliday junction (HJ) DNA during genetic recombination and DNA repair. Endonuclease that resolves HJ intermediates. Cleaves cruciform DNA by making single-stranded nicks across the HJ at symmetrical positions within the homologous arms, yielding a 5'-phosphate and a 3'-hydroxyl group; requires a central core of homology in the junction. The consensus cleavage sequence is 5'-(A/T)TT(C/G)-3'. Cleavage occurs on the 3'-side of the TT dinucleotide at the point of strand exchange. HJ branch migration catalyzed by RuvA-RuvB allows RuvC to scan DNA until it finds its consensus sequence, where it cleaves and resolves the cruciform DNA. This is Crossover junction endodeoxyribonuclease RuvC from Maricaulis maris (strain MCS10) (Caulobacter maris).